We begin with the raw amino-acid sequence, 368 residues long: Probable staphylococcal-like nuclease CAN2 (368 aa).

Gly2 carries the N-myristoyl glycine lipid modification. The S-palmitoyl cysteine moiety is linked to residue Cys7. The segment at 16 to 56 is disordered; the sequence is DHYPYYKPTSRPHYQPPHYHGQPAAPPAPLQQQHLGPHGVT. The segment covering 27–38 has biased composition (low complexity); sequence PHYQPPHYHGQP. The 177-residue stretch at 168-344 folds into the TNase-like domain; sequence NTLPVYDKCI…RAANRGLWAS (177 aa). Asp181 contacts Ca(2+). The active site involves Arg251. Residue Asp256 coordinates Ca(2+). Catalysis depends on residues Glu259 and Arg293.

This sequence belongs to the thermonuclease family. Requires Ca(2+) as cofactor.

It localises to the cell membrane. Enzyme that catalyzes the hydrolysis of both DNA and RNA at the 5' position of the phosphodiester bond. In Oryza sativa subsp. japonica (Rice), this protein is Probable staphylococcal-like nuclease CAN2.